Here is a 281-residue protein sequence, read N- to C-terminus: MPELPEVETVRRGLQPHLEGRVIARAEARRPDLRWPLPPDLVQVLTGARVVALRRRSKYILAELEDRGSLLLHLGMSGRMLIEGESQGDFHRDPAILPRHDHVVLWNDQGTRITFNDARRFGMVDLVPPGAEHPLLAHLGPEPLSDAFTAEALAAAFAGRRMPVKAALLDQRIVAGLGNIYVSEALYRAGIDPRRLAGAVTAPEVAALVGHVRAVLEEAIAAGGSSLRDHRQATGELGYFQHSFRVYGREGAPCPTPGCTGTVQRIVQSGRSSFFCPLCQQ.

Residue Pro-2 is the Schiff-base intermediate with DNA of the active site. Catalysis depends on Glu-3, which acts as the Proton donor. The Proton donor; for beta-elimination activity role is filled by Lys-58. The DNA site is built by His-100, Arg-119, and Arg-160. The FPG-type zinc finger occupies 245-281; that stretch reads RVYGREGAPCPTPGCTGTVQRIVQSGRSSFFCPLCQQ. Residue Arg-271 is the Proton donor; for delta-elimination activity of the active site.

This sequence belongs to the FPG family. As to quaternary structure, monomer. The cofactor is Zn(2+).

It catalyses the reaction Hydrolysis of DNA containing ring-opened 7-methylguanine residues, releasing 2,6-diamino-4-hydroxy-5-(N-methyl)formamidopyrimidine.. The catalysed reaction is 2'-deoxyribonucleotide-(2'-deoxyribose 5'-phosphate)-2'-deoxyribonucleotide-DNA = a 3'-end 2'-deoxyribonucleotide-(2,3-dehydro-2,3-deoxyribose 5'-phosphate)-DNA + a 5'-end 5'-phospho-2'-deoxyribonucleoside-DNA + H(+). In terms of biological role, involved in base excision repair of DNA damaged by oxidation or by mutagenic agents. Acts as a DNA glycosylase that recognizes and removes damaged bases. Has a preference for oxidized purines, such as 7,8-dihydro-8-oxoguanine (8-oxoG). Has AP (apurinic/apyrimidinic) lyase activity and introduces nicks in the DNA strand. Cleaves the DNA backbone by beta-delta elimination to generate a single-strand break at the site of the removed base with both 3'- and 5'-phosphates. The polypeptide is Formamidopyrimidine-DNA glycosylase (Paracoccus denitrificans (strain Pd 1222)).